Reading from the N-terminus, the 69-residue chain is UPF0150 protein ssr1258 (69 aa).

This sequence belongs to the UPF0150 family.

The chain is UPF0150 protein ssr1258 from Synechocystis sp. (strain ATCC 27184 / PCC 6803 / Kazusa).